Here is a 324-residue protein sequence, read N- to C-terminus: NAD(P)H-dependent D-xylose reductase xyl1 (324 aa).

The active-site Proton donor is Tyr50. Residue His112 participates in substrate binding. NAD(+) contacts are provided by residues 168-169 (SN), 217-226 (SSFGPTGFME), and 273-283 (KTSRPEVMAQN).

It belongs to the aldo/keto reductase family.

The enzyme catalyses an alditol + NAD(+) = an aldose + NADH + H(+). It carries out the reaction an alditol + NADP(+) = an aldose + NADPH + H(+). The catalysed reaction is xylitol + NAD(+) = D-xylose + NADH + H(+). It catalyses the reaction xylitol + NADP(+) = D-xylose + NADPH + H(+). It functions in the pathway carbohydrate metabolism; D-xylose degradation. It participates in carbohydrate degradation; L-arabinose degradation via L-arabinitol; D-xylulose 5-phosphate from L-arabinose (fungal route): step 1/5. Its function is as follows. Catalyzes the initial reaction in the xylose utilization pathway by reducing D-xylose into xylitol. Xylose is a major component of hemicelluloses such as xylan. Most fungi utilize D-xylose via three enzymatic reactions, xylose reductase (XR), xylitol dehydrogenase (XDH), and xylulokinase, to form xylulose 5-phosphate, which enters pentose phosphate pathway. Also major aldose reductase in pentose and D-galactose catabolism. Reduces the pentose L-arabinose and the hexose D-galactose to their respective polyols. Responsible for extracellular beta-galactosidase formation and cellulase induction during growth on lactose. This Hypocrea jecorina (Trichoderma reesei) protein is NAD(P)H-dependent D-xylose reductase xyl1 (xyl1).